A 296-amino-acid chain; its full sequence is MNDYLGAHMSIAGGIHKAPARGNRVGCGVIQVFTQNSNQWRGKMPTEGEAALFREQWEAAGLHEIIAHDIYLINLAAPPGETRDKSLAAFREEMERCTRLGIGTIVMHPGAHLGDGEETGIRRICEAFNRLIPAVPEFTGVILLETTAGQGTSLGHTFEQLAAIIAGTAFPDRFAVCFDTCHTFAAGYDFTTGEGYRRVFAEFDRLIGLDRLRCFHLNDSRKGLNSRVDRHEHIGRGTLGLEPFRFLMNDDRFTTVPKILETPKGDDDEFDIMNLNTLRRLVRRRTTKERTEPCPS.

Positions 68, 108, 145, 179, 182, 216, 229, 231, and 261 each coordinate Zn(2+).

The protein belongs to the AP endonuclease 2 family. Zn(2+) is required as a cofactor.

It catalyses the reaction Endonucleolytic cleavage to 5'-phosphooligonucleotide end-products.. Its function is as follows. Endonuclease IV plays a role in DNA repair. It cleaves phosphodiester bonds at apurinic or apyrimidinic (AP) sites, generating a 3'-hydroxyl group and a 5'-terminal sugar phosphate. The sequence is that of Probable endonuclease 4 from Geobacter sulfurreducens (strain ATCC 51573 / DSM 12127 / PCA).